The sequence spans 97 residues: Stefin-1 (97 aa).

The short motif at 46–50 (QVVAG) is the Secondary area of contact element.

The protein belongs to the cystatin family.

Its subcellular location is the cytoplasm. Its function is as follows. This is an intracellular thiol proteinase inhibitor. The polypeptide is Stefin-1 (Stfa1) (Mus musculus (Mouse)).